Here is a 563-residue protein sequence, read N- to C-terminus: Arginine--tRNA ligase (563 aa).

Residues 120–130 (PNIAKPFHIGH) carry the 'HIGH' region motif.

It belongs to the class-I aminoacyl-tRNA synthetase family. Monomer.

It is found in the cytoplasm. The catalysed reaction is tRNA(Arg) + L-arginine + ATP = L-arginyl-tRNA(Arg) + AMP + diphosphate. The protein is Arginine--tRNA ligase of Clostridium botulinum (strain ATCC 19397 / Type A).